Reading from the N-terminus, the 896-residue chain is Alanine--tRNA ligase (896 aa).

Residues histidine 574, histidine 578, cysteine 677, and histidine 681 each contribute to the Zn(2+) site.

Belongs to the class-II aminoacyl-tRNA synthetase family. Zn(2+) serves as cofactor.

The protein localises to the cytoplasm. It catalyses the reaction tRNA(Ala) + L-alanine + ATP = L-alanyl-tRNA(Ala) + AMP + diphosphate. Catalyzes the attachment of alanine to tRNA(Ala) in a two-step reaction: alanine is first activated by ATP to form Ala-AMP and then transferred to the acceptor end of tRNA(Ala). Also edits incorrectly charged Ser-tRNA(Ala) and Gly-tRNA(Ala) via its editing domain. The polypeptide is Alanine--tRNA ligase (Mycoplasma capricolum subsp. capricolum (strain California kid / ATCC 27343 / NCTC 10154)).